Consider the following 402-residue polypeptide: Imidazolonepropionase (402 aa).

The Fe(3+) site is built by histidine 66 and histidine 68. Positions 66 and 68 each coordinate Zn(2+). The 4-imidazolone-5-propanoate site is built by arginine 75, tyrosine 138, and histidine 171. Residue tyrosine 138 participates in N-formimidoyl-L-glutamate binding. Histidine 236 is a binding site for Fe(3+). Histidine 236 contributes to the Zn(2+) binding site. Glutamine 239 serves as a coordination point for 4-imidazolone-5-propanoate. Aspartate 311 lines the Fe(3+) pocket. Residue aspartate 311 participates in Zn(2+) binding. Residues asparagine 313 and glycine 315 each coordinate N-formimidoyl-L-glutamate. Threonine 316 serves as a coordination point for 4-imidazolone-5-propanoate.

Belongs to the metallo-dependent hydrolases superfamily. HutI family. Zn(2+) is required as a cofactor. It depends on Fe(3+) as a cofactor.

The protein resides in the cytoplasm. It catalyses the reaction 4-imidazolone-5-propanoate + H2O = N-formimidoyl-L-glutamate. The protein operates within amino-acid degradation; L-histidine degradation into L-glutamate; N-formimidoyl-L-glutamate from L-histidine: step 3/3. In terms of biological role, catalyzes the hydrolytic cleavage of the carbon-nitrogen bond in imidazolone-5-propanoate to yield N-formimidoyl-L-glutamate. It is the third step in the universal histidine degradation pathway. The sequence is that of Imidazolonepropionase from Pseudomonas paraeruginosa (strain DSM 24068 / PA7) (Pseudomonas aeruginosa (strain PA7)).